A 155-amino-acid chain; its full sequence is Small ribosomal subunit protein uS7cz/uS7cy (155 aa).

This sequence belongs to the universal ribosomal protein uS7 family. Part of the 30S ribosomal subunit.

Its subcellular location is the plastid. The protein resides in the chloroplast. Functionally, one of the primary rRNA binding proteins, it binds directly to 16S rRNA where it nucleates assembly of the head domain of the 30S subunit. The chain is Small ribosomal subunit protein uS7cz/uS7cy (rps7-A) from Pelargonium hortorum (Common geranium).